We begin with the raw amino-acid sequence, 159 residues long: Phosphopantetheine adenylyltransferase (159 aa).

His16 is an ATP binding site. The substrate site is built by Lys40, Met72, and Arg86. Residues 87–89, Glu97, and 122–128 contribute to the ATP site; these read GLR and YQYLSAS.

Belongs to the bacterial CoaD family. In terms of assembly, homohexamer. Mg(2+) is required as a cofactor.

Its subcellular location is the cytoplasm. It catalyses the reaction (R)-4'-phosphopantetheine + ATP + H(+) = 3'-dephospho-CoA + diphosphate. Its pathway is cofactor biosynthesis; coenzyme A biosynthesis; CoA from (R)-pantothenate: step 4/5. Its function is as follows. Reversibly transfers an adenylyl group from ATP to 4'-phosphopantetheine, yielding dephospho-CoA (dPCoA) and pyrophosphate. In Dehalococcoides mccartyi (strain ATCC BAA-2266 / KCTC 15142 / 195) (Dehalococcoides ethenogenes (strain 195)), this protein is Phosphopantetheine adenylyltransferase.